The sequence spans 679 residues: Methyl-accepting chemotaxis protein McpB (679 aa).

3 divergent domain HAMP regions span residues Ala-8–Arg-56, Gln-63–Ile-112, and His-111–Arg-156. The PAS domain occupies Tyr-171–Ile-213. Position 234 (His-234) interacts with heme. Residues Asp-285 to Thr-287 carry the DxT. Important for signal propagation motif. Positions Glu-289–Val-332 are divergent domain HAMP 4. The HAMP 5 domain occupies Asp-333–Gly-385. The 230-residue stretch at Ala-390 to Gln-619 folds into the Methyl-accepting transducer domain. 2 disordered regions span residues Asn-405 to Ser-425 and Ala-644 to Phe-679. Positions Arg-411 to Ser-425 are enriched in polar residues. Residues Ala-670–Phe-679 show a composition bias toward basic and acidic residues. The short motif at Gly-675 to Phe-679 is the GWEEF pentapeptide. Important for methylation by CheR2 element.

The protein belongs to the methyl-accepting chemotaxis (MCP) protein family. Homodimer. The PAS domains form dimers in the presence and absence of oxygen. Interacts with the methyltransferase CheR2 via the C-terminal McpB pentapeptide GWEEF. Interacts with the methylesterase/gutaminase CheB2, which also binds to the GWEEF pentapeptide. Post-translationally, methylated by CheR2, but not by CheR1, CheR3 or WspC. Demethylated by CheB2. In vitro, can be methylated by E.coli CheR.

It localises to the cytoplasm. Functionally, chemoreceptor that plays a critical role in the virulence and pathogenesis of P.aeruginosa in a variety of hosts. Probably acts through oxygen sensing. Uses a heme-based sensor. Could be involved in chemotaxis. When expressed in E.coli, is able to sense and mediate repellent responses to oxygen, carbon monoxide and nitric oxide. This chain is Methyl-accepting chemotaxis protein McpB, found in Pseudomonas aeruginosa (strain ATCC 15692 / DSM 22644 / CIP 104116 / JCM 14847 / LMG 12228 / 1C / PRS 101 / PAO1).